The following is a 467-amino-acid chain: Venom prothrombin activator omicarin-C catalytic subunit (467 aa).

Positions Met1–Ala20 are cleaved as a signal peptide. A propeptide spanning residues Glu21 to Arg40 is cleaved from the precursor. The Gla domain occupies Ala41 to Asp86. Residues Glu46, Glu47, Glu54, Glu56, Glu59, Glu60, Glu65, Glu66, Glu69, Glu72, and Glu75 each carry the 4-carboxyglutamate modification. Cysteines 57 and 62 form a disulfide. Residues Asp86–Glu122 form the EGF-like 1; calcium-binding domain. 11 disulfide bridges follow: Cys90-Cys101, Cys95-Cys110, Cys112-Cys121, Cys129-Cys140, Cys136-Cys149, Cys151-Cys164, Cys172-Cys329, Cys216-Cys221, Cys236-Cys252, Cys377-Cys391, and Cys402-Cys430. An O-linked (Hex...) serine glycan is attached at Ser92. Residues Cys129–Cys164 form the EGF-like 2 domain. The propeptide at Arg182–Arg209 is activation peptide. Residues Ile210 to Arg454 enclose the Peptidase S1 domain. The active-site Charge relay system is His251. Asn254 is a glycosylation site (N-linked (GlcNAc...) asparagine). The active-site Charge relay system is the Asp309. Ser406 acts as the Charge relay system in catalysis.

Belongs to the peptidase S1 family. Snake venom subfamily. In terms of assembly, heterodimer of a light and a heavy chains; disulfide-linked. Is associated with omicarin-C non-catalytic subunit (AC Q58L90) in a non-covalent manner. Post-translationally, gamma-carboxyglutamate residues are formed by vitamin K dependent carboxylation. These residues are essential for the binding of calcium. In terms of tissue distribution, expressed by the venom gland.

It localises to the secreted. It catalyses the reaction Selective cleavage of Arg-|-Thr and then Arg-|-Ile bonds in prothrombin to form thrombin.. With respect to regulation, activated by calcium and negatively charged phospholipids. Snake prothrombin activator that attacks the hemostatic system of prey. This catalytic subunit is functionally similar to blood coagulation factor Xa. It requires a non-catalytic subunit present in the venom, which is similar to coagulation factor Va, to be fully active. The chain is Venom prothrombin activator omicarin-C catalytic subunit from Oxyuranus microlepidotus (Inland taipan).